Here is a 1233-residue protein sequence, read N- to C-terminus: uncharacterized protein (1233 aa).

Disordered regions lie at residues 1 to 39 (MVES…PSTN), 65 to 116 (QELS…DAIS), 160 to 211 (AEGT…TDLS), 250 to 577 (EKMD…DAPR), 594 to 825 (DLEV…NSEK), 851 to 872 (NKEN…NSEK), and 902 to 955 (EDVE…ENSK). Positions 72-83 (KSSKLKGHKKKN) are enriched in basic residues. Residue Ser-180 is modified to Phosphoserine. A compositionally biased stretch (basic residues) spans 183–199 (TRRKKNKKKKTTNRRGR). Over residues 201–211 (SSNPADTTDLS) the composition is skewed to polar residues. Composition is skewed to basic and acidic residues over residues 250–280 (EKMD…ETSS) and 287–300 (NEEK…REEN). Residues 329–345 (GQASTKDVESESLTKNG) are compositionally biased toward polar residues. Basic and acidic residues-rich tracts occupy residues 349-370 (KENE…DRDG) and 379-408 (NQKE…ELSV). Residues 409-422 (NHENNMSHNFNAAG) show a composition bias toward polar residues. Ser-462 is subject to Phosphoserine. A compositionally biased stretch (acidic residues) spans 466 to 478 (EKEEEEEEEEEEN). 5 stretches are compositionally biased toward basic and acidic residues: residues 484 to 497 (VKKE…EAVR), 508 to 527 (STSK…EAGE), 594 to 622 (DLEV…DKIA), 631 to 672 (EDMK…KTPE), and 684 to 711 (RPED…DVKP). Ser-523 bears the Phosphoserine mark. A compositionally biased stretch (polar residues) spans 728–739 (QRVQISTEQAET). Basic and acidic residues predominate over residues 753-783 (FKEEEKPKRFEITQEGDKITGKDTNHEHGEA). Residues 855–868 (EDVEVDTEEDAEVE) show a composition bias toward acidic residues. Thr-861 carries the post-translational modification Phosphothreonine. Basic and acidic residues-rich tracts occupy residues 910 to 920 (SKEDIETKCSE) and 935 to 948 (EVSK…TKED). Phosphoserine is present on Ser-975. Disordered regions lie at residues 984-1071 (LPEL…PKKA) and 1109-1128 (KDST…KPQD). Basic and acidic residues predominate over residues 986 to 999 (ELEKQDIKDNKGED). 2 positions are modified to phosphoserine: Ser-1037 and Ser-1046. Basic and acidic residues-rich tracts occupy residues 1062-1071 (QSTRENPKKA) and 1118-1127 (QSKKNNDKPQ). Positions 1132-1233 (TSEIRKLNEK…KLRELIYDTI (102 aa)) constitute a Glutaredoxin domain.

This is an uncharacterized protein from Saccharomyces cerevisiae (strain ATCC 204508 / S288c) (Baker's yeast).